The chain runs to 137 residues: Large ribosomal subunit protein uL16 (137 aa).

The protein belongs to the universal ribosomal protein uL16 family. As to quaternary structure, part of the 50S ribosomal subunit.

In terms of biological role, binds 23S rRNA and is also seen to make contacts with the A and possibly P site tRNAs. In Acinetobacter baumannii (strain AB307-0294), this protein is Large ribosomal subunit protein uL16.